A 180-amino-acid polypeptide reads, in one-letter code: Large ribosomal subunit protein uL6 (180 aa).

The protein belongs to the universal ribosomal protein uL6 family. Part of the 50S ribosomal subunit.

In terms of biological role, this protein binds to the 23S rRNA, and is important in its secondary structure. It is located near the subunit interface in the base of the L7/L12 stalk, and near the tRNA binding site of the peptidyltransferase center. The chain is Large ribosomal subunit protein uL6 from Clostridium botulinum (strain ATCC 19397 / Type A).